Reading from the N-terminus, the 160-residue chain is Nascent polypeptide-associated complex subunit beta (160 aa).

Disordered stretches follow at residues 16 to 36 (GGKG…GTDD) and 118 to 160 (ESYQ…TEVE). Over residues 20–30 (TPRRKVKKVHK) the composition is skewed to basic residues. The 66-residue stretch at 33–98 (GTDDKKLQTA…GEDKELTELV (66 aa)) folds into the NAC-A/B domain. The segment covering 124-134 (QKEKGEDGDKK) has biased composition (basic and acidic residues). Positions 135–145 (DDDDEDDDDIP) are enriched in acidic residues.

The protein belongs to the NAC-beta family. As to quaternary structure, part of the nascent polypeptide-associated complex (NAC), consisting of EGD2 and EGD1. NAC associates with ribosomes via EGD1.

The protein localises to the cytoplasm. The protein resides in the nucleus. Component of the nascent polypeptide-associated complex (NAC), a dynamic component of the ribosomal exit tunnel, protecting the emerging polypeptides from interaction with other cytoplasmic proteins to ensure appropriate nascent protein targeting. The NAC complex also promotes mitochondrial protein import by enhancing productive ribosome interactions with the outer mitochondrial membrane and blocks the inappropriate interaction of ribosomes translating non-secretory nascent polypeptides with translocation sites in the membrane of the endoplasmic reticulum. EGD1 may act as a transcription factor that exert a negative effect on the expression of several genes that are transcribed by RNA polymerase II. The polypeptide is Nascent polypeptide-associated complex subunit beta (EGD1) (Phaeosphaeria nodorum (strain SN15 / ATCC MYA-4574 / FGSC 10173) (Glume blotch fungus)).